Here is a 433-residue protein sequence, read N- to C-terminus: Enolase (433 aa).

Gln-167 contributes to the (2R)-2-phosphoglycerate binding site. The active-site Proton donor is the Glu-209. Positions 246, 291, and 318 each coordinate Mg(2+). (2R)-2-phosphoglycerate contacts are provided by Lys-343, Arg-372, Ser-373, and Lys-394. The active-site Proton acceptor is Lys-343.

It belongs to the enolase family. Component of the RNA degradosome, a multiprotein complex involved in RNA processing and mRNA degradation. Mg(2+) serves as cofactor.

It localises to the cytoplasm. Its subcellular location is the secreted. The protein resides in the cell surface. The catalysed reaction is (2R)-2-phosphoglycerate = phosphoenolpyruvate + H2O. It participates in carbohydrate degradation; glycolysis; pyruvate from D-glyceraldehyde 3-phosphate: step 4/5. Its function is as follows. Catalyzes the reversible conversion of 2-phosphoglycerate (2-PG) into phosphoenolpyruvate (PEP). It is essential for the degradation of carbohydrates via glycolysis. The protein is Enolase of Actinobacillus succinogenes (strain ATCC 55618 / DSM 22257 / CCUG 43843 / 130Z).